Reading from the N-terminus, the 293-residue chain is Beta-lactamase (293 aa).

The first 27 residues, 1–27, serve as a signal peptide directing secretion; it reads MRFTATVLSRVATGLALGLSMATASLA. Ser-74 functions as the Acyl-ester intermediate in the catalytic mechanism. 238-240 contributes to the substrate binding site; sequence KSG.

Belongs to the class-A beta-lactamase family.

The protein localises to the periplasm. It carries out the reaction a beta-lactam + H2O = a substituted beta-amino acid. Hydrolyzes beta-lactams antibiotics. Rates of hydrolysis relative to benzylpenicillin =100: ampicillin = 27, carbenicillin = 25, cloxacillin = 0, cephaloridine = 4. The polypeptide is Beta-lactamase (Rhodobacter capsulatus (Rhodopseudomonas capsulata)).